Reading from the N-terminus, the 175-residue chain is Ribosome maturation factor RimM (175 aa).

In terms of domain architecture, PRC barrel spans 99–171 (AGEYYWFQLK…RILFDLPDGL (73 aa)).

The protein belongs to the RimM family. As to quaternary structure, binds ribosomal protein uS19.

The protein localises to the cytoplasm. In terms of biological role, an accessory protein needed during the final step in the assembly of 30S ribosomal subunit, possibly for assembly of the head region. Essential for efficient processing of 16S rRNA. May be needed both before and after RbfA during the maturation of 16S rRNA. It has affinity for free ribosomal 30S subunits but not for 70S ribosomes. The sequence is that of Ribosome maturation factor RimM from Syntrophotalea carbinolica (strain DSM 2380 / NBRC 103641 / GraBd1) (Pelobacter carbinolicus).